A 214-amino-acid polypeptide reads, in one-letter code: Ribonuclease HII (214 aa).

Residues 26–214 (EIVCGVDEAG…PVRAALDLIR (189 aa)) form the RNase H type-2 domain. Positions 32, 33, and 124 each coordinate a divalent metal cation.

It belongs to the RNase HII family. It depends on Mn(2+) as a cofactor. Mg(2+) serves as cofactor.

It localises to the cytoplasm. The enzyme catalyses Endonucleolytic cleavage to 5'-phosphomonoester.. In terms of biological role, endonuclease that specifically degrades the RNA of RNA-DNA hybrids. The chain is Ribonuclease HII from Burkholderia lata (strain ATCC 17760 / DSM 23089 / LMG 22485 / NCIMB 9086 / R18194 / 383).